A 258-amino-acid polypeptide reads, in one-letter code: Small ribosomal subunit protein mS40 (258 aa).

The transit peptide at 1 to 35 (MAASVLNTVLRRLPMLSLFRGSHRVQVPLQTLCTK) directs the protein to the mitochondrion. 2 positions are modified to phosphoserine: Ser38 and Ser49. The segment at 214–258 (SRLRRLYQGHLQEESGPPPESMPKMPPRTPAEASSTGQTGPQSAL) is disordered. Residues 229–242 (GPPPESMPKMPPRT) are compositionally biased toward pro residues. A compositionally biased stretch (polar residues) spans 245–258 (EASSTGQTGPQSAL).

It belongs to the bacterial ribosomal protein bS18 family. Mitochondrion-specific ribosomal protein mS40 subfamily. In terms of assembly, component of the mitochondrial small ribosomal subunit (mt-SSU). Mature mammalian 55S mitochondrial ribosomes consist of a small (28S) and a large (39S) subunit. The 28S small subunit contains a 12S ribosomal RNA (12S mt-rRNA) and 30 different proteins. The 39S large subunit contains a 16S rRNA (16S mt-rRNA), a copy of mitochondrial valine transfer RNA (mt-tRNA(Val)), which plays an integral structural role, and 52 different proteins. mS40 has a zinc binding site.

The protein resides in the mitochondrion. The polypeptide is Small ribosomal subunit protein mS40 (MRPS18B) (Homo sapiens (Human)).